The chain runs to 368 residues: 4-hydroxy-3-methylbut-2-en-1-yl diphosphate synthase (flavodoxin) (368 aa).

Cysteine 268, cysteine 271, cysteine 303, and glutamate 310 together coordinate [4Fe-4S] cluster.

The protein belongs to the IspG family. It depends on [4Fe-4S] cluster as a cofactor.

The catalysed reaction is (2E)-4-hydroxy-3-methylbut-2-enyl diphosphate + oxidized [flavodoxin] + H2O + 2 H(+) = 2-C-methyl-D-erythritol 2,4-cyclic diphosphate + reduced [flavodoxin]. Its pathway is isoprenoid biosynthesis; isopentenyl diphosphate biosynthesis via DXP pathway; isopentenyl diphosphate from 1-deoxy-D-xylulose 5-phosphate: step 5/6. Converts 2C-methyl-D-erythritol 2,4-cyclodiphosphate (ME-2,4cPP) into 1-hydroxy-2-methyl-2-(E)-butenyl 4-diphosphate. This chain is 4-hydroxy-3-methylbut-2-en-1-yl diphosphate synthase (flavodoxin), found in Bacillus cytotoxicus (strain DSM 22905 / CIP 110041 / 391-98 / NVH 391-98).